A 160-amino-acid polypeptide reads, in one-letter code: UPF0225 protein CGSHiGG_04185 (160 aa).

Belongs to the UPF0225 family.

The sequence is that of UPF0225 protein CGSHiGG_04185 from Haemophilus influenzae (strain PittGG).